We begin with the raw amino-acid sequence, 622 residues long: Cell pattern formation-associated protein stuA (622 aa).

Disordered regions lie at residues 1 to 24 and 62 to 81; these read MASM…QTYA and YPNS…SISS. The region spanning 129-235 is the HTH APSES-type domain; it reads RVTATLWEDE…QHISNLLYHP (107 aa). The H-T-H motif DNA-binding region spans 163 to 184; that stretch reads GTKLLNVAGMTRGRRDGILKSE. Disordered regions lie at residues 239-517 and 549-622; these read NQRN…TPPR and SNSG…SARR. 3 stretches are compositionally biased toward polar residues: residues 274 to 283, 302 to 345, and 355 to 370; these read LQTPVPSHMS, ASAS…ARSM, and GNNL…QSGY. Residues 384–395 are compositionally biased toward low complexity; the sequence is PQYAPQQPLPQQ. Polar residues-rich tracts occupy residues 404–421, 455–470, 480–506, and 549–563; these read MPTS…QRGS, SGYN…TNPS, QLTP…NTAP, and SNSG…SMGS. Residues 565–590 are nuclear localization domain; sequence KRMRDDDDDRIVPPDSRGEFDTKRRK. Positions 566–586 are enriched in basic and acidic residues; the sequence is RMRDDDDDRIVPPDSRGEFDT.

Belongs to the EFG1/PHD1/stuA family.

The protein resides in the nucleus. In terms of biological role, transcription factor that regulates asexual reproduction. Binds the StuA-response elements (StRE) with the consensus sequence 5'-(A/T)CGCG(T/A)N(A/C)-3' at the promoters of target genes. Required from the very earliest events of asexual reproduction until completion of conidiophore development, but is not specifically required for differentiation of conidia. Represses transcription of the abaA developmental regulatory gene and of the developmentally regulated awh11 gene. Controls the expression of the catalase-peroxidase gene cpeA. Plays an important role in cell wall biogenesis during the development by controlling the transcription level of fksA. The chain is Cell pattern formation-associated protein stuA from Emericella nidulans (strain FGSC A4 / ATCC 38163 / CBS 112.46 / NRRL 194 / M139) (Aspergillus nidulans).